Here is a 330-residue protein sequence, read N- to C-terminus: Ribosomal RNA small subunit methyltransferase H (330 aa).

Residues Gly-50 to His-52, Asp-69, Leu-103, Asp-117, and Gln-124 each bind S-adenosyl-L-methionine.

It belongs to the methyltransferase superfamily. RsmH family.

The protein resides in the cytoplasm. The enzyme catalyses cytidine(1402) in 16S rRNA + S-adenosyl-L-methionine = N(4)-methylcytidine(1402) in 16S rRNA + S-adenosyl-L-homocysteine + H(+). Specifically methylates the N4 position of cytidine in position 1402 (C1402) of 16S rRNA. This is Ribosomal RNA small subunit methyltransferase H from Saccharopolyspora erythraea (strain ATCC 11635 / DSM 40517 / JCM 4748 / NBRC 13426 / NCIMB 8594 / NRRL 2338).